A 340-amino-acid chain; its full sequence is Methionine import ATP-binding protein MetN 2 (340 aa).

The region spanning 2-241 (ITLQNVVKEY…PQEKVTQRFV (240 aa)) is the ABC transporter domain. An ATP-binding site is contributed by 38-45 (GYSGAGKS).

It belongs to the ABC transporter superfamily. Methionine importer (TC 3.A.1.24) family. As to quaternary structure, the complex is composed of two ATP-binding proteins (MetN), two transmembrane proteins (MetI) and a solute-binding protein (MetQ).

The protein resides in the cell membrane. The enzyme catalyses L-methionine(out) + ATP + H2O = L-methionine(in) + ADP + phosphate + H(+). The catalysed reaction is D-methionine(out) + ATP + H2O = D-methionine(in) + ADP + phosphate + H(+). Functionally, part of the ABC transporter complex MetNIQ involved in methionine import. Responsible for energy coupling to the transport system. The chain is Methionine import ATP-binding protein MetN 2 from Listeria monocytogenes serovar 1/2a (strain ATCC BAA-679 / EGD-e).